Here is a 69-residue protein sequence, read N- to C-terminus: Antimicrobial peptide Eval36 (69 aa).

An N-terminal signal peptide occupies residues 1–23 (MKAQFAILVISMMLLQLIVQTES). L37 bears the Leucine amide mark. A propeptide spanning residues 38-69 (GKRGLRNLDDFQDFLDSDTSDADLRMLRDMFR) is cleaved from the precursor.

It belongs to the non-disulfide-bridged peptide (NDBP) superfamily. Short antimicrobial peptide (group 4) family. In terms of tissue distribution, expressed by the venom gland.

It localises to the secreted. Its function is as follows. Probable antimicrobial peptide. Shows low inhibitory activity against herpes simplex virus type 1 (HSV-1). The sequence is that of Antimicrobial peptide Eval36 from Euscorpiops validus (Scorpion).